The sequence spans 740 residues: Ion-translocating oxidoreductase complex subunit C (740 aa).

2 consecutive 4Fe-4S ferredoxin-type domains span residues 369-397 (GEPQ…QQLY) and 407-436 (KATT…VQYF). Residues Cys-377, Cys-380, Cys-383, Cys-387, Cys-416, Cys-419, Cys-422, and Cys-426 each contribute to the [4Fe-4S] cluster site. Disordered stretches follow at residues 602 to 652 (KLEQ…DPRK), 664 to 685 (ARKL…PRKA), and 695 to 714 (KARK…QVDP). A compositionally biased stretch (low complexity) spans 605–615 (QQQANAEPEQQ).

The protein belongs to the 4Fe4S bacterial-type ferredoxin family. RnfC subfamily. In terms of assembly, the complex is composed of six subunits: RsxA, RsxB, RsxC, RsxD, RsxE and RsxG. [4Fe-4S] cluster is required as a cofactor.

The protein resides in the cell inner membrane. Functionally, part of a membrane-bound complex that couples electron transfer with translocation of ions across the membrane. Required to maintain the reduced state of SoxR. The protein is Ion-translocating oxidoreductase complex subunit C of Escherichia coli O157:H7.